We begin with the raw amino-acid sequence, 67 residues long: Small ribosomal subunit protein eS17 (67 aa).

This sequence belongs to the eukaryotic ribosomal protein eS17 family.

This is Small ribosomal subunit protein eS17 from Pyrococcus abyssi (strain GE5 / Orsay).